Reading from the N-terminus, the 579-residue chain is Mycobactin import ATP-binding/permease protein IrtB (579 aa).

The Cytoplasmic segment spans residues 1 to 16 (MIRTWIALVPNDHRAR). Residues 17 to 37 (LIGFALLAFCSVVARAVGTVL) form a helical membrane-spanning segment. The ABC transmembrane type-1 domain maps to 17 to 299 (LIGFALLAFC…VSELAPALES (283 aa)). Topologically, residues 38–52 (LVPLMAALFGEAPQR) are periplasmic. Residues 53 to 73 (AWLWLGWLSAATVAGWVLDAV) traverse the membrane as a helical segment. The Cytoplasmic portion of the chain corresponds to 74–123 (TARIGIELGFAVLNHTQHDVADRLPVVRLDWFTAENTATARQAIAATGPE). The helical transmembrane segment at 124-146 (LVGLVVNLVTPLTSAILLPAVIA) threads the bilayer. The Periplasmic segment spans residues 147–155 (LALLPISWQ). Residues 156–178 (LGVAALAGVPLLLGALWASAAFA) traverse the membrane as a helical segment. The Cytoplasmic portion of the chain corresponds to 179 to 237 (RRADTAADKANTALTERIIEFARTQQALRAARRVEPARSLVGNALASQHTATMRLLGMQ). The chain crosses the membrane as a helical span at residues 238–258 (IPGQLLFSIASQLALIVLAGT). The Periplasmic segment spans residues 259–579 (TAALTITGTL…EAAEWQILAE (321 aa)). In terms of domain architecture, ABC transporter spans 332–567 (IEFDDVAFGY…GGRFSQFWRQ (236 aa)). Residue 366–373 (GPSGCGKS) participates in ATP binding.

It belongs to the ABC transporter superfamily. Siderophore-Fe(3+) uptake transporter (SIUT) (TC 3.A.1.21) family. Forms a heterodimer with IrtA.

It localises to the cell inner membrane. Its function is as follows. Part of the ABC transporter complex IrtAB involved in the import of iron-bound mycobactin (Fe-MBT) and carboxymycobactin (Fe-cMBT). Transmembrane domains (TMD) form a pore in the membrane and the ATP-binding domain (NBD) is responsible for energy generation. This chain is Mycobactin import ATP-binding/permease protein IrtB (irtB), found in Mycobacterium bovis (strain ATCC BAA-935 / AF2122/97).